We begin with the raw amino-acid sequence, 1197 residues long: PAN2-PAN3 deadenylation complex catalytic subunit PAN2 (1197 aa).

WD repeat units lie at residues 153-193 (DEAE…QKYT), 195-231 (EVPG…VEHE), 244-280 (VHGN…ATTP), and 328-367 (TVGP…TFNT). Positions 368 to 485 (YSRETDFALP…IGREEEPHLY (118 aa)) are linker. The USP domain maps to 486–919 (MVAKKYRKVT…VPAILYYARR (434 aa)). The Exonuclease domain maps to 970–1142 (VGLDAEFVTL…EDARTALQLY (173 aa)). Asp973, Glu975, Asp1082, and Asp1134 together coordinate a divalent metal cation. The disordered stretch occupies residues 1176–1197 (VPEPDSQSSPKHGAVFPPVLAL).

Belongs to the peptidase C19 family. PAN2 subfamily. As to quaternary structure, forms a heterotrimer with an asymmetric homodimer of the regulatory subunit PAN3 to form the poly(A)-nuclease (PAN) deadenylation complex. It depends on a divalent metal cation as a cofactor.

The protein localises to the cytoplasm. It is found in the P-body. Its subcellular location is the nucleus. It catalyses the reaction Exonucleolytic cleavage of poly(A) to 5'-AMP.. Its activity is regulated as follows. Positively regulated by the regulatory subunit PAN3. Its function is as follows. Catalytic subunit of the poly(A)-nuclease (PAN) deadenylation complex, one of two cytoplasmic mRNA deadenylases involved in general and miRNA-mediated mRNA turnover. PAN specifically shortens poly(A) tails of RNA and the activity is stimulated by poly(A)-binding protein (PABP). PAN deadenylation is followed by rapid degradation of the shortened mRNA tails by the CCR4-NOT complex. Deadenylated mRNAs are then degraded by two alternative mechanisms, namely exosome-mediated 3'-5' exonucleolytic degradation, or deadenylation-dependent mRNA decaping and subsequent 5'-3' exonucleolytic degradation by XRN1. The polypeptide is PAN2-PAN3 deadenylation complex catalytic subunit PAN2 (Gallus gallus (Chicken)).